A 523-amino-acid polypeptide reads, in one-letter code: Peptide chain release factor 3 (523 aa).

In terms of domain architecture, tr-type G spans 10–277; sequence KKRRTFAIIS…SFVDLAPAPE (268 aa). GTP contacts are provided by residues 19–26, 87–91, and 141–144; these read SHPDAGKT, DTPGH, and NKLD.

It belongs to the TRAFAC class translation factor GTPase superfamily. Classic translation factor GTPase family. PrfC subfamily.

The protein resides in the cytoplasm. Functionally, increases the formation of ribosomal termination complexes and stimulates activities of RF-1 and RF-2. It binds guanine nucleotides and has strong preference for UGA stop codons. It may interact directly with the ribosome. The stimulation of RF-1 and RF-2 is significantly reduced by GTP and GDP, but not by GMP. The chain is Peptide chain release factor 3 from Lactobacillus helveticus (strain DPC 4571).